The sequence spans 228 residues: E3 ubiquitin-protein ligase RNF114 (228 aa).

Residues 29–68 (CPVCLEVYEKPVQVPCGHVFCSACLQECLKPKKPVCGVCR) form an RING-type zinc finger. Cysteine 91 and cysteine 94 together coordinate Zn(2+). Residues 91–110 (CHGCRKKFFLSKIRSHVATC) form a C2HC RNF-type zinc finger. Lysine 102 bears the N6-acetyllysine mark. Zn(2+) is bound by residues histidine 106 and cysteine 110. Position 112 is an N6-acetyllysine (lysine 112).

Interacts with XAF1, the interaction increases XAF1 stability and proapoptotic effects, and may regulate IFN signaling. Autoubiquitinated. Polyubiquitinated in the presence of E2 enzymes UBE2D1, UBE2D2 and UBE2D3, but only monoubiquitinated in the presence of UBE2E1.

It is found in the cytoplasm. The protein resides in the nucleus. It carries out the reaction S-ubiquitinyl-[E2 ubiquitin-conjugating enzyme]-L-cysteine + [acceptor protein]-L-lysine = [E2 ubiquitin-conjugating enzyme]-L-cysteine + N(6)-ubiquitinyl-[acceptor protein]-L-lysine.. It participates in protein modification; protein ubiquitination. Its function is as follows. E3 ubiquitin-protein ligase that promotes the ubiquitination of various substrates. In turn, participates in the regulation of many biological processes including cell cycle, apoptosis, osteoclastogenesis as well as innate or adaptive immunity. Acts as negative regulator of NF-kappa-B-dependent transcription by promoting the ubiquitination and stabilization of the NF-kappa-B inhibitor TNFAIP3. May promote the ubiquitination of TRAF6 as well. Also acts as a negative regulator of T-cell activation. Inhibits cellular dsRNA responses and interferon production by targeting MAVS component for proteasomal degradation. Ubiquitinates the CDK inhibitor CDKN1A leading to its degradationand probably also CDKN1B and CDKN1C. This activity stimulates cell cycle G1-to-S phase transition and suppresses cellular senescence. May play a role in spermatogenesis. This Pan troglodytes (Chimpanzee) protein is E3 ubiquitin-protein ligase RNF114 (RNF114).